We begin with the raw amino-acid sequence, 126 residues long: Protein Wnt-7(II) (126 aa).

The O-palmitoleoyl serine; by PORCN moiety is linked to residue Ser-1. The cysteines at positions 92 and 107 are disulfide-linked. N-linked (GlcNAc...) asparagine glycosylation is present at Asn-93.

This sequence belongs to the Wnt family. Post-translationally, palmitoleoylation is required for efficient binding to frizzled receptors. Depalmitoleoylation leads to Wnt signaling pathway inhibition.

It localises to the secreted. It is found in the extracellular space. The protein resides in the extracellular matrix. Functionally, ligand for members of the frizzled family of seven transmembrane receptors. Probable developmental protein. May be a signaling molecule which affects the development of discrete regions of tissues. Is likely to signal over only few cell diameters. The chain is Protein Wnt-7(II) (WNT-7(II)) from Eptatretus stoutii (Pacific hagfish).